The chain runs to 261 residues: Fructoselysine 6-kinase (261 aa).

This sequence belongs to the carbohydrate kinase PfkB family. As to quaternary structure, monomer.

It carries out the reaction N(6)-(D-fructosyl)-L-lysine + ATP = N(6)-(6-phospho-D-fructosyl)-L-lysine + ADP + H(+). It participates in carbohydrate metabolism; fructoselysine degradation; D-glucose 6-phosphate and lysine from fructoselysine: step 1/2. Its function is as follows. Catalyzes the ATP-dependent phosphorylation of fructoselysine to fructoselysine 6-phosphate. Functions in a fructoselysine degradation pathway that allows E.coli to grow on fructoselysine or psicoselysine. To a much lesser extenst, is also able to phosphorylate psicoselysine. This is Fructoselysine 6-kinase from Escherichia coli (strain K12).